The sequence spans 416 residues: S-adenosylmethionine synthase (416 aa).

ATP is bound at residue histidine 14. Aspartate 16 contacts Mg(2+). Glutamate 42 lines the K(+) pocket. L-methionine is bound by residues glutamate 55 and glutamine 98. Residues 98–108 are flexible loop; sequence QSADINQGVDR. Residues 164 to 166, 240 to 241, aspartate 249, 255 to 256, alanine 272, and lysine 276 each bind ATP; these read DAK, KF, and RK. Aspartate 249 contacts L-methionine. Residue lysine 280 participates in L-methionine binding.

The protein belongs to the AdoMet synthase family. Homotetramer; dimer of dimers. Mg(2+) is required as a cofactor. Requires K(+) as cofactor.

It is found in the cytoplasm. The catalysed reaction is L-methionine + ATP + H2O = S-adenosyl-L-methionine + phosphate + diphosphate. Its pathway is amino-acid biosynthesis; S-adenosyl-L-methionine biosynthesis; S-adenosyl-L-methionine from L-methionine: step 1/1. Catalyzes the formation of S-adenosylmethionine (AdoMet) from methionine and ATP. The overall synthetic reaction is composed of two sequential steps, AdoMet formation and the subsequent tripolyphosphate hydrolysis which occurs prior to release of AdoMet from the enzyme. This is S-adenosylmethionine synthase from Flavobacterium psychrophilum (strain ATCC 49511 / DSM 21280 / CIP 103535 / JIP02/86).